The primary structure comprises 432 residues: MKFSYSFVQVVTLLLSLSPSVEGFTRSRNDACKPNHPFRPLPPSQPRTKTCHVVSNGHGKDDSKNIMKALHKCNNGGKVVFDANKVYTVGTALDMTFLKHIDLEVLGKIQFTNDTDYWQANSFKHGFQNATTFFQLGGEDVNVYGGGTLDGNGQVWYDLYAEDALILRPILFGVIGLKGGTIGPLKLRYSPQWYQLVANSSDVIFDGIDISGYSSSKNEAKNTDGWDTYRSDNIVIQNSVINNGDDCVSFKPNSTNILVQNLHCNGSHGISVGSLGQYKGEVDIVQNVLVYNISMYNASDGARIKVWPGVSSAMSEDLQGGGGLGSVKNVTYNQMYIENVDWAIEVTQCYGQKNLTLCNEYPSNLTISDIHFKNFRGTTSGKRDPNVGTIVCSSPNVCSDIYAENIDVKSPKGTDNFVCTNVDKSLLDVNCA.

Residues 1 to 23 (MKFSYSFVQVVTLLLSLSPSVEG) form the signal peptide. N-linked (GlcNAc...) asparagine glycans are attached at residues Asn113, Asn129, and Asn199. One copy of the PbH1 1 repeat lies at 231-252 (SDNIVIQNSVINNGDDCVSFKP). Asp245 serves as the catalytic Proton donor. A disulfide bond links Cys247 and Cys264. N-linked (GlcNAc...) asparagine glycans are attached at residues Asn253 and Asn265. PbH1 repeat units follow at residues 254–274 (STNI…SVGS), 285–306 (VQNV…RIKV), and 327–348 (VKNV…EVTQ). Residue His268 is part of the active site. 5 N-linked (GlcNAc...) asparagine glycosylation sites follow: Asn292, Asn297, Asn329, Asn354, and Asn364. One copy of the PbH1 5 repeat lies at 362-394 (PSNLTISDIHFKNFRGTTSGKRDPNVGTIVCSS). Residues Cys392 and Cys398 are joined by a disulfide bond.

It belongs to the glycosyl hydrolase 28 family.

It localises to the secreted. The catalysed reaction is [(1-&gt;4)-alpha-D-galacturonosyl](n) + H2O = alpha-D-galacturonate + [(1-&gt;4)-alpha-D-galacturonosyl](n-1). Its function is as follows. Specific in hydrolyzing the terminal glycosidic bond of polygalacturonic acid and oligogalacturonates. The polypeptide is Probable exopolygalacturonase X (pgaX) (Aspergillus fumigatus (strain CBS 144.89 / FGSC A1163 / CEA10) (Neosartorya fumigata)).